The chain runs to 347 residues: Phosphate acyltransferase (347 aa).

It belongs to the PlsX family. In terms of assembly, homodimer. Probably interacts with PlsY.

The protein resides in the cytoplasm. The enzyme catalyses a fatty acyl-[ACP] + phosphate = an acyl phosphate + holo-[ACP]. Its pathway is lipid metabolism; phospholipid metabolism. Catalyzes the reversible formation of acyl-phosphate (acyl-PO(4)) from acyl-[acyl-carrier-protein] (acyl-ACP). This enzyme utilizes acyl-ACP as fatty acyl donor, but not acyl-CoA. The chain is Phosphate acyltransferase from Anaplasma marginale (strain St. Maries).